The following is a 408-amino-acid chain: Serine/threonine-protein kinase UCNL (408 aa).

The region spanning 21–341 is the Protein kinase domain; it reads IKALKILGKG…AAEIKELAFF (321 aa). ATP contacts are provided by residues 27–35 and Lys-54; that span reads LGKGATGTV. Asp-152 serves as the catalytic Proton acceptor. Positions 342–408 constitute an AGC-kinase C-terminal domain; sequence AGVRWDLLTE…CRKNDPFIEF (67 aa).

The protein belongs to the protein kinase superfamily. AGC Ser/Thr protein kinase family. In terms of tissue distribution, expressed in the epidermis and cortex of the transition zone of the root apex. Expressed in rosette leaves, stems, flowers and siliques.

The protein localises to the cytoplasm. It is found in the nucleus. The catalysed reaction is L-seryl-[protein] + ATP = O-phospho-L-seryl-[protein] + ADP + H(+). It carries out the reaction L-threonyl-[protein] + ATP = O-phospho-L-threonyl-[protein] + ADP + H(+). Regulates planar ovule integument development. This chain is Serine/threonine-protein kinase UCNL, found in Arabidopsis thaliana (Mouse-ear cress).